Here is a 176-residue protein sequence, read N- to C-terminus: MSEKPASMYRKIDKPSYTRRDYVTGIPGSKIAQHKMGDLQADADDYPVQISLVPQEECQLRHGSLEAARLSANRHLIKELGEGNYKMQLRKFPHQIIRENKQATGAGADRVSDGMRQAFGVPVGTAARIQPGDQLFTAYCEVEQAAAVKEAFRRAYNKITPPCKINVERGETLLVR.

It belongs to the universal ribosomal protein uL16 family.

The protein is Large ribosomal subunit protein uL16 of Halobacterium salinarum (strain ATCC 29341 / DSM 671 / R1).